Here is a 193-residue protein sequence, read N- to C-terminus: Cryptic protein (193 aa).

Positions 1–25 (MFWRKHVRILFTVTLIWQAIHLGKG) are cleaved as a signal peptide. N-linked (GlcNAc...) asparagine glycosylation is found at N38 and N60. Disulfide bonds link C91/C103 and C105/C114. One can recognise an EGF-like domain in the interval 91–115 (CQNGGTCILGAFCACPKHFSGRHCE).

This sequence belongs to the EGF-CFC (Cripto-1/FRL1/Cryptic) family.

Its subcellular location is the cell membrane. The protein resides in the secreted. Its function is as follows. May play a role in mesoderm and/or neural patterning during gastrulation. The protein is Cryptic protein (CFC1) of Gallus gallus (Chicken).